The sequence spans 366 residues: MNKIALYCRPGFEKECAAEITDKAGQKEIYGFARVKDNSGYVLFECYQYEDADRLIREIPFRELIFARQMLVVGELLRDLPPEDRISPIVGMLHGVIERAGELRVEVPDTNESKELLKFCRKFTVPLRNAMRQEKILLIRENVNRPVIHVFFIAPGCCYVGYSYSNNNSPFYMGIPRLKFPSDAPSRSTLKLEEAFHVFIPHDEWEERLASGLYAVDLGACPGGWTYQLVKRSMMVHAVDNGTMSKSLMDTGQVKHHKVDGFKFEPSAKNIYWLVCDMVEKPAKVTQLMVDWLVNGWCREAIFNLKLPMKKRYEEVAHNLQKMHLQLKEGGINAQIQAKHLYHDREEITVHVRRIWSAYAASRNDY.

Residues serine 188, 221-224 (CPGG), aspartate 240, aspartate 260, and aspartate 277 each bind S-adenosyl-L-methionine. Residue lysine 306 is the Proton acceptor of the active site.

The protein belongs to the class I-like SAM-binding methyltransferase superfamily. RNA methyltransferase RlmE family. RlmM subfamily. In terms of assembly, monomer.

The protein localises to the cytoplasm. The catalysed reaction is cytidine(2498) in 23S rRNA + S-adenosyl-L-methionine = 2'-O-methylcytidine(2498) in 23S rRNA + S-adenosyl-L-homocysteine + H(+). Its function is as follows. Catalyzes the 2'-O-methylation at nucleotide C2498 in 23S rRNA. This Photorhabdus laumondii subsp. laumondii (strain DSM 15139 / CIP 105565 / TT01) (Photorhabdus luminescens subsp. laumondii) protein is Ribosomal RNA large subunit methyltransferase M.